We begin with the raw amino-acid sequence, 330 residues long: Ribosomal RNA small subunit methyltransferase C (330 aa).

It belongs to the methyltransferase superfamily. RsmC family. In terms of assembly, monomer.

The protein localises to the cytoplasm. The enzyme catalyses guanosine(1207) in 16S rRNA + S-adenosyl-L-methionine = N(2)-methylguanosine(1207) in 16S rRNA + S-adenosyl-L-homocysteine + H(+). In terms of biological role, specifically methylates the guanine in position 1207 of 16S rRNA in the 30S particle. This is Ribosomal RNA small subunit methyltransferase C from Haemophilus influenzae (strain ATCC 51907 / DSM 11121 / KW20 / Rd).